We begin with the raw amino-acid sequence, 406 residues long: 3-isopropylmalate dehydrogenase, chloroplastic (406 aa).

The N-terminal 34 residues, 1–34 (MAAALQTNIRPVKFPATLRALTKQSSPAPFRVRC), are a transit peptide targeting the chloroplast. Phosphoserine is present on serine 71. 117–130 (GYKWDKNEKHLKPE) is a binding site for NAD(+). Residues arginine 137, arginine 147, arginine 175, and aspartate 265 each coordinate substrate. Residues aspartate 265, aspartate 289, and aspartate 293 each contribute to the Mg(2+) site. Residue 323–335 (GSAPDIAGQDKAN) coordinates NAD(+).

The protein belongs to the isocitrate and isopropylmalate dehydrogenases family. Homodimer. Mg(2+) serves as cofactor. The cofactor is Mn(2+).

The protein localises to the plastid. It is found in the chloroplast. The enzyme catalyses (2R,3S)-3-isopropylmalate + NAD(+) = 4-methyl-2-oxopentanoate + CO2 + NADH. The protein operates within amino-acid biosynthesis; L-leucine biosynthesis; L-leucine from 3-methyl-2-oxobutanoate: step 3/4. Its function is as follows. Catalyzes the oxidation of 3-carboxy-2-hydroxy-4-methylpentanoate (3-isopropylmalate) to 3-carboxy-4-methyl-2-oxopentanoate. The product decarboxylates to 4-methyl-2 oxopentanoate. The protein is 3-isopropylmalate dehydrogenase, chloroplastic of Brassica napus (Rape).